A 690-amino-acid polypeptide reads, in one-letter code: DNA ligase (690 aa).

Residues 36–40 (DSVYD), 85–86 (SL), and E124 contribute to the NAD(+) site. The active-site N6-AMP-lysine intermediate is the K126. Residues R147, E184, K308, and K332 each coordinate NAD(+). 4 residues coordinate Zn(2+): C426, C429, C444, and C449. One can recognise a BRCT domain in the interval 614–690 (NQSNVFDGKS…INENELKLLL (77 aa)).

This sequence belongs to the NAD-dependent DNA ligase family. LigA subfamily. The cofactor is Mg(2+). Mn(2+) is required as a cofactor.

The catalysed reaction is NAD(+) + (deoxyribonucleotide)n-3'-hydroxyl + 5'-phospho-(deoxyribonucleotide)m = (deoxyribonucleotide)n+m + AMP + beta-nicotinamide D-nucleotide.. Functionally, DNA ligase that catalyzes the formation of phosphodiester linkages between 5'-phosphoryl and 3'-hydroxyl groups in double-stranded DNA using NAD as a coenzyme and as the energy source for the reaction. It is essential for DNA replication and repair of damaged DNA. The protein is DNA ligase of Prochlorococcus marinus (strain NATL2A).